The chain runs to 301 residues: B3 domain-containing protein At5g18090 (301 aa).

Positions 18-113 (FFKILRSADL…CFTVDIYQID (96 aa)) form a DNA-binding region, TF-B3 1. 2 disordered regions span residues 123 to 142 (SATI…NNIY) and 153 to 194 (SWSE…KMKV). The segment covering 133 to 142 (NKREQRNNIY) has biased composition (basic and acidic residues). Residues 209-301 (VPEFTLTIKK…PTEMLVRVSK (93 aa)) constitute a DNA-binding region (TF-B3 2).

It localises to the nucleus. The sequence is that of B3 domain-containing protein At5g18090 from Arabidopsis thaliana (Mouse-ear cress).